A 64-amino-acid polypeptide reads, in one-letter code: Large ribosomal subunit protein bL35 (64 aa).

The segment covering 1–28 (MSKAKTHSGAAKRFKKTASGYKHKHAFK) has biased composition (basic residues). Residues 1 to 51 (MSKAKTHSGAAKRFKKTASGYKHKHAFKSHILTKMTTKRKRQLRGTSLLNA) are disordered.

The protein belongs to the bacterial ribosomal protein bL35 family.

The chain is Large ribosomal subunit protein bL35 from Saccharophagus degradans (strain 2-40 / ATCC 43961 / DSM 17024).